A 213-amino-acid chain; its full sequence is Large ribosomal subunit protein uL1 (213 aa).

Belongs to the universal ribosomal protein uL1 family. Part of the 50S ribosomal subunit.

In terms of biological role, binds directly to 23S rRNA. Probably involved in E site tRNA release. Its function is as follows. Protein L1 is also a translational repressor protein, it controls the translation of its operon by binding to its mRNA. This Methanosarcina mazei (strain ATCC BAA-159 / DSM 3647 / Goe1 / Go1 / JCM 11833 / OCM 88) (Methanosarcina frisia) protein is Large ribosomal subunit protein uL1.